The chain runs to 37 residues: Delta-amaurobitoxin-Pl1a (37 aa).

4 disulfides stabilise this stretch: cysteine 2–cysteine 18, cysteine 9–cysteine 23, cysteine 17–cysteine 33, and cysteine 25–cysteine 31. A Serine amide modification is found at serine 37.

Belongs to the neurotoxin 07 (Beta/delta-agtx) family. 02 (aga-3) subfamily. Expressed by the venom gland.

It localises to the secreted. Its function is as follows. Binds at site 4 of sodium channels (Nav) and inhibits the fast inactivation of cockroach channels. This toxin is active only on insects. Has a potent activity against S.litura larvae. In Pireneitega luctuosa (Tangled nest spider), this protein is Delta-amaurobitoxin-Pl1a.